Consider the following 353-residue polypeptide: Putative glutamine synthetase (353 aa).

A GS beta-grasp domain is found at 19–102; it reads SIIEYVWIGG…VICDTYDVNG (84 aa). The region spanning 109-353 is the GS catalytic domain; sequence HRHNANIIFE…IILQTVCESD (245 aa).

It belongs to the glutamine synthetase family.

It carries out the reaction L-glutamate + NH4(+) + ATP = L-glutamine + ADP + phosphate + H(+). The chain is Putative glutamine synthetase from Acanthamoeba polyphaga (Amoeba).